The primary structure comprises 346 residues: Acetyl-coenzyme A carboxylase carboxyl transferase subunit beta (346 aa).

Residues 24–292 enclose the CoA carboxyltransferase N-terminal domain; that stretch reads LWIKCPKSGD…LPEVEPIAVA (269 aa). Acidic residues predominate over residues 300–311; that stretch reads AEAEAAPDEVVE. The segment at 300 to 346 is disordered; that stretch reads AEAEAAPDEVVEVEAPAVDEIVEEKPAATKAKPRSKAKSKAAPKTDE. A compositionally biased stretch (basic residues) spans 330-340; it reads AKPRSKAKSKA.

The protein belongs to the AccD/PCCB family. Acetyl-CoA carboxylase is a heterohexamer composed of biotin carboxyl carrier protein (AccB), biotin carboxylase (AccC) and two subunits each of ACCase subunit alpha (AccA) and ACCase subunit beta (AccD).

It is found in the cytoplasm. It catalyses the reaction N(6)-carboxybiotinyl-L-lysyl-[protein] + acetyl-CoA = N(6)-biotinyl-L-lysyl-[protein] + malonyl-CoA. It participates in lipid metabolism; malonyl-CoA biosynthesis; malonyl-CoA from acetyl-CoA: step 1/1. In terms of biological role, component of the acetyl coenzyme A carboxylase (ACC) complex. Biotin carboxylase (BC) catalyzes the carboxylation of biotin on its carrier protein (BCCP) and then the CO(2) group is transferred by the transcarboxylase to acetyl-CoA to form malonyl-CoA. In Hirschia baltica (strain ATCC 49814 / DSM 5838 / IFAM 1418), this protein is Acetyl-coenzyme A carboxylase carboxyl transferase subunit beta.